The chain runs to 1031 residues: Putative protein TIC 214 N-terminal part (1031 aa).

Helical transmembrane passes span 11–31 (ILWA…LFGL), 68–88 (TLGQ…IMLL), 92–112 (AITL…KDLS), 127–147 (GIIQ…ILLP), 166–186 (SFFV…LINL), and 212–232 (TFSI…PVPF).

This sequence belongs to the TIC214 family. Part of the Tic complex.

Its subcellular location is the plastid. The protein localises to the chloroplast inner membrane. Functionally, involved in protein precursor import into chloroplasts. May be part of an intermediate translocation complex acting as a protein-conducting channel at the inner envelope. The chain is Putative protein TIC 214 N-terminal part from Anthoceros angustus (Hornwort).